Here is a 335-residue protein sequence, read N- to C-terminus: NmrA-like family domain-containing oxidoreductase lnbB (335 aa).

Residues 14 to 18 (GTGNQ), 41 to 45 (RHPDS), 62 to 63 (DG), 83 to 85 (TNS), Lys142, and 166 to 169 (YYEQ) each bind NADP(+).

It belongs to the NmrA-type oxidoreductase family.

The protein operates within secondary metabolite biosynthesis. NmrA-like family domain-containing oxidoreductase; part of the lnb gene cluster that mediates the biosynthesis of diastereomeric piperazines. Lna and lnb clusters encode sets of enzymes that produce overlapping sets of previously undescribed metabolites such as piperazinomycin-like metabolites or morpholine. The lna and lnb biosynthetic pathways appear to be part of a signaling network that controls the formation of sclerotia, a resilient overwintering structure. One primary function of the non-canonical nonribosomal peptide synthetases lnaA and lnbA consists in the reduction of L-tyrosine. The presence in the clusters of tailoring enzymes such as the oxidoreductases lnaB, lnbB, lnaE or lnbE, as well as of the cytochrome P450 monooxygenases lnaC, lnaD, or lnbC, might explain formation of various diastereomeric piperazines. The chain is NmrA-like family domain-containing oxidoreductase lnbB from Aspergillus flavus (strain ATCC 200026 / FGSC A1120 / IAM 13836 / NRRL 3357 / JCM 12722 / SRRC 167).